Reading from the N-terminus, the 411-residue chain is 6-hydroxytryprostatin B O-methyltransferase (411 aa).

Residue Asp270 participates in S-adenosyl-L-methionine binding. The Proton acceptor role is filled by His313.

This sequence belongs to the class I-like SAM-binding methyltransferase superfamily. Cation-independent O-methyltransferase family. Homodimer.

It catalyses the reaction 6-hydroxytryprostatin B + S-adenosyl-L-methionine = tryprostatin A + S-adenosyl-L-homocysteine + H(+). It functions in the pathway alkaloid biosynthesis. 6-hydroxytryprostatin B O-methyltransferase; part of the gene cluster that mediates the biosynthesis of fumitremorgins, indole alkaloids that carry not only intriguing chemical structures, but also interesting biological and pharmacological activities. The biosynthesis of fumitremorgin-type alkaloids begins by condensation of the two amino acids L-tryptophan and L-proline to brevianamide F, catalyzed by the non-ribosomal peptide synthetase ftmPS/ftmA. Brevianamide F is then prenylated by the prenyltransferase ftmPT1/ftmB in the presence of dimethylallyl diphosphate, resulting in the formation of tryprostatin B. The three cytochrome P450 monooxygenases, ftmP450-1/ftmC, ftmP450-2/ftmE and ftmP450-3/FtmG, are responsible for the conversion of tryprostatin B to 6-hydroxytryprostatin B, tryprostatin A to fumitremorgin C and fumitremorgin C to 12,13-dihydroxyfumitremorgin C, respectively. The putative methyltransferase ftmMT/ftmD is expected for the conversion of 6-hydroxytryprostatin B to tryprostatin A. FtmPT2/FtmH catalyzes the prenylation of 12,13-dihydroxyfumitre-morgin C in the presence of dimethylallyl diphosphate, resulting in the formation of fumitremorgin B. Fumitremorgin B is further converted to verruculogen by ftmOx1/ftmF via the insertion of an endoperoxide bond between the two prenyl moieties. Finally, verruculogen is further converted to fumitremorgin A by the verruculogen prenyltransferase ftmPT3. The sequence is that of 6-hydroxytryprostatin B O-methyltransferase from Neosartorya fischeri (strain ATCC 1020 / DSM 3700 / CBS 544.65 / FGSC A1164 / JCM 1740 / NRRL 181 / WB 181) (Aspergillus fischerianus).